A 509-amino-acid chain; its full sequence is uncharacterized protein (509 aa).

Its subcellular location is the virion. This is an uncharacterized protein from Acanthamoeba polyphaga mimivirus (APMV).